A 731-amino-acid polypeptide reads, in one-letter code: Unconventional prefoldin RPB5 interactor-like protein (731 aa).

Coiled-coil stretches lie at residues 91–115 and 143–176; these read RLKL…KLHT and LAEH…LRKL. Over residues 205 to 217 the composition is skewed to polar residues; the sequence is PLKSTNESSPKSL. Disordered regions lie at residues 205 to 224, 259 to 302, and 370 to 396; these read PLKS…EEDE, MSGE…EEEV, and ASEE…TVSE. A coiled-coil region spans residues 220 to 258; the sequence is EEEDELWKKLEAEEQNEADELSSEAEESLKTTDNLVRQL. A compositionally biased stretch (acidic residues) spans 285–300; sequence ISEDDGDDDDEGDQEE. Coiled coils occupy residues 357–379 and 452–477; these read DDLQ…EVVE and SIKT…VKEN. 2 stretches are compositionally biased toward polar residues: residues 508–518 and 575–599; these read GAIPSPSSDQS and SQFS…TSND. 3 disordered regions span residues 508 to 527, 567 to 682, and 694 to 731; these read GAIP…KPSD, GSAY…DLRD, and VEKE…LNKT. The segment covering 611–621 has biased composition (basic and acidic residues); that stretch reads FYEKYEKDRAK. The span at 623–644 shows a compositional bias: polar residues; sequence SKSNSSEGDATDPESATKSILR. Residues 661-673 are compositionally biased toward basic residues; the sequence is KKGRKVRNQKKKE. The span at 721 to 731 shows a compositional bias: basic and acidic residues; the sequence is RFKEQRALNKT.

This sequence belongs to the RNA polymerase II subunit 5-mediating protein family. In terms of assembly, interacts with serine/threonine-protein phosphatases flw/PP1beta9C and Pp1-87B with higher affinity for Pp1-87B.

The protein localises to the cytoplasm. The protein resides in the chromosome. It localises to the nucleus. In terms of biological role, inhibits the activity of serine/threonine-protein phosphatases flw/PP1beta9C and Pp1-87B. Required for germ line cell viability and differentiation, normal transcriptional activity and maintenance of DNA integrity. The polypeptide is Unconventional prefoldin RPB5 interactor-like protein (Drosophila melanogaster (Fruit fly)).